The primary structure comprises 395 residues: Na(+)/H(+) antiporter NhaA (395 aa).

11 helical membrane-spanning segments follow: residues 11-31, 61-81, 96-116, 127-147, 156-176, 179-199, 202-222, 264-284, 295-315, 331-351, and 366-386; these read FAMEAASGLLLIAAAILALII, LLLWINDGLMALFFLLIGLEV, IVLPGAAAIGGMLVPALIYWF, GWAIPTATDIAFALGVLALLG, LFLMTLAIIDDLGAIVIIAIF, GTLSTLSLMLAGACIAALVAM, MGVVKLGPYMIIGLILWVCVL, FGILPLFAFANAGLSLSGVTL, IAVGLLLGKTIGVFGLTWMAV, VLGVAILCGIGFTMSLFVGSL, and MGILTGSLFAALIGYAVTAAA.

This sequence belongs to the NhaA Na(+)/H(+) (TC 2.A.33) antiporter family.

It localises to the cell inner membrane. The enzyme catalyses Na(+)(in) + 2 H(+)(out) = Na(+)(out) + 2 H(+)(in). Functionally, na(+)/H(+) antiporter that extrudes sodium in exchange for external protons. This Pseudomonas fluorescens (strain ATCC BAA-477 / NRRL B-23932 / Pf-5) protein is Na(+)/H(+) antiporter NhaA.